The following is a 593-amino-acid chain: Aspartate--tRNA(Asp/Asn) ligase (593 aa).

Glutamate 172 is an L-aspartate binding site. An aspartate region spans residues 196–199 (QLFK). Arginine 218 contacts L-aspartate. ATP-binding positions include 218-220 (RDE) and glutamine 227. Histidine 450 provides a ligand contact to L-aspartate. Glutamate 484 is a binding site for ATP. Arginine 491 lines the L-aspartate pocket. 536–539 (GLDR) provides a ligand contact to ATP.

The protein belongs to the class-II aminoacyl-tRNA synthetase family. Type 1 subfamily. In terms of assembly, homodimer.

The protein resides in the cytoplasm. It catalyses the reaction tRNA(Asx) + L-aspartate + ATP = L-aspartyl-tRNA(Asx) + AMP + diphosphate. In terms of biological role, aspartyl-tRNA synthetase with relaxed tRNA specificity since it is able to aspartylate not only its cognate tRNA(Asp) but also tRNA(Asn). Reaction proceeds in two steps: L-aspartate is first activated by ATP to form Asp-AMP and then transferred to the acceptor end of tRNA(Asp/Asn). The protein is Aspartate--tRNA(Asp/Asn) ligase of Nitrosomonas eutropha (strain DSM 101675 / C91 / Nm57).